The chain runs to 208 residues: MGLMHRVLLLATFALLCMHAKAAGFDHDKVPRTVERGGGARQLRTATMSDDEARVSKLPSFIESFVKNRKIESWIQNKVTDDFVLSELKLVRLPGTSLADDPNFKLFQKFKIGGWLEEKATTTKAWENLGLDSLPFDQVSKIDEFKTYTQYVTVLNKKASKLDIDQWHGLLSGGSPEELMAKAMILRTLGRDVLERRVMLGGHVVVPF.

The N-terminal stretch at 1–22 (MGLMHRVLLLATFALLCMHAKA) is a signal peptide. The RxLR-dEER motif lies at 41 to 54 (RQLRTATMSDDEAR). The interval 70 to 92 (KIESWIQNKVTDDFVLSELKLVR) is W1-motif. The tract at residues 93–110 (LPGTSLADDPNFKLFQKF) is linker region ln1. The W2-motif stretch occupies residues 111–136 (KIGGWLEEKATTTKAWENLGLDSLPF). Residues 137–157 (DQVSKIDEFKTYTQYVTVLNK) are Y-motif. Positions 158–170 (KASKLDIDQWHGL) are linker region ln2. The interval 170–208 (LLSGGSPEELMAKAMILRTLGRDVLERRVMLGGHVVVPF) is T-region.

Belongs to the RxLR effector family. Interacts with host exocyst component Sec5.

The protein resides in the secreted. It is found in the host cytoplasm. The protein localises to the host nucleus. It localises to the host peroxisome. Functionally, secreted effector that acts as an elicitor of hypersensitive response (HR) specifically on plants carrying defense protein R1, through its interaction with this protein. Also acts as a virulence factor that promotes colonization and suppresses cell death induced by CRN2 as well as callose deposition, a hallmark of basal defense. Interacts with host exocyst component Sec5 and thereby disturbs vesicle trafficking, a cellular process that is important for basal defense. By targeting and stabilizing Sec5 in the cytoplasm, the exocyst complex is thus out of balance and not able to mediate the focal secretion of PR-1 and callose. The polypeptide is RxLR effector protein Avr1 (Phytophthora infestans (strain T30-4) (Potato late blight agent)).